The following is an 87-amino-acid chain: MVKDLKQEIITKYQLHEGDTGSPEVQVAILTQRINHLNEHLKIHKKDYHSGRGLLKMVGARRSLLNYLKKNDIERYRAIIQKLGLRK.

This sequence belongs to the universal ribosomal protein uS15 family. As to quaternary structure, part of the 30S ribosomal subunit. Forms a bridge to the 50S subunit in the 70S ribosome, contacting the 23S rRNA.

Its function is as follows. One of the primary rRNA binding proteins, it binds directly to 16S rRNA where it helps nucleate assembly of the platform of the 30S subunit by binding and bridging several RNA helices of the 16S rRNA. In terms of biological role, forms an intersubunit bridge (bridge B4) with the 23S rRNA of the 50S subunit in the ribosome. This Ruminiclostridium cellulolyticum (strain ATCC 35319 / DSM 5812 / JCM 6584 / H10) (Clostridium cellulolyticum) protein is Small ribosomal subunit protein uS15.